A 145-amino-acid chain; its full sequence is D-aminoacyl-tRNA deacylase (145 aa).

The short motif at 137–138 is the Gly-cisPro motif, important for rejection of L-amino acids element; sequence GP.

This sequence belongs to the DTD family. In terms of assembly, homodimer.

It is found in the cytoplasm. It carries out the reaction glycyl-tRNA(Ala) + H2O = tRNA(Ala) + glycine + H(+). The enzyme catalyses a D-aminoacyl-tRNA + H2O = a tRNA + a D-alpha-amino acid + H(+). Functionally, an aminoacyl-tRNA editing enzyme that deacylates mischarged D-aminoacyl-tRNAs. Also deacylates mischarged glycyl-tRNA(Ala), protecting cells against glycine mischarging by AlaRS. Acts via tRNA-based rather than protein-based catalysis; rejects L-amino acids rather than detecting D-amino acids in the active site. By recycling D-aminoacyl-tRNA to D-amino acids and free tRNA molecules, this enzyme counteracts the toxicity associated with the formation of D-aminoacyl-tRNA entities in vivo and helps enforce protein L-homochirality. The protein is D-aminoacyl-tRNA deacylase of Ectopseudomonas mendocina (strain ymp) (Pseudomonas mendocina).